Here is a 216-residue protein sequence, read N- to C-terminus: Uracil-DNA glycosylase (216 aa).

The Proton acceptor role is filled by Asp-60.

The protein belongs to the uracil-DNA glycosylase (UDG) superfamily. UNG family.

Its subcellular location is the cytoplasm. It catalyses the reaction Hydrolyzes single-stranded DNA or mismatched double-stranded DNA and polynucleotides, releasing free uracil.. In terms of biological role, excises uracil residues from the DNA which can arise as a result of misincorporation of dUMP residues by DNA polymerase or due to deamination of cytosine. This Psychromonas ingrahamii (strain DSM 17664 / CCUG 51855 / 37) protein is Uracil-DNA glycosylase.